The primary structure comprises 362 residues: Molybdenum import ATP-binding protein ModC (362 aa).

The region spanning 2 to 236 (VSPIEVRLQM…LDLPLAMGDD (235 aa)) is the ABC transporter domain. 34–41 (GPSGSGKT) provides a ligand contact to ATP. In terms of domain architecture, Mop spans 297–362 (HSSILNRLPV…AQIKAVAVLA (66 aa)).

This sequence belongs to the ABC transporter superfamily. Molybdate importer (TC 3.A.1.8) family. In terms of assembly, the complex is composed of two ATP-binding proteins (ModC), two transmembrane proteins (ModB) and a solute-binding protein (ModA).

It is found in the cell inner membrane. The enzyme catalyses molybdate(out) + ATP + H2O = molybdate(in) + ADP + phosphate + H(+). Functionally, part of the ABC transporter complex ModABC involved in molybdenum import. Responsible for energy coupling to the transport system. The protein is Molybdenum import ATP-binding protein ModC of Pseudomonas syringae pv. tomato (strain ATCC BAA-871 / DC3000).